The sequence spans 177 residues: ATP synthase subunit delta (177 aa).

Belongs to the ATPase delta chain family. As to quaternary structure, F-type ATPases have 2 components, F(1) - the catalytic core - and F(0) - the membrane proton channel. F(1) has five subunits: alpha(3), beta(3), gamma(1), delta(1), epsilon(1). F(0) has three main subunits: a(1), b(2) and c(10-14). The alpha and beta chains form an alternating ring which encloses part of the gamma chain. F(1) is attached to F(0) by a central stalk formed by the gamma and epsilon chains, while a peripheral stalk is formed by the delta and b chains.

It localises to the cell inner membrane. In terms of biological role, f(1)F(0) ATP synthase produces ATP from ADP in the presence of a proton or sodium gradient. F-type ATPases consist of two structural domains, F(1) containing the extramembraneous catalytic core and F(0) containing the membrane proton channel, linked together by a central stalk and a peripheral stalk. During catalysis, ATP synthesis in the catalytic domain of F(1) is coupled via a rotary mechanism of the central stalk subunits to proton translocation. Its function is as follows. This protein is part of the stalk that links CF(0) to CF(1). It either transmits conformational changes from CF(0) to CF(1) or is implicated in proton conduction. The sequence is that of ATP synthase subunit delta from Shewanella sediminis (strain HAW-EB3).